We begin with the raw amino-acid sequence, 708 residues long: Protein MICRORCHIDIA 5 (708 aa).

Polar residues predominate over residues 1–11 (MAESGSTNPKS). Residues 1–47 (MAESGSTNPKSPSVVPDSTLGGLKRDLRNYHDGDDSNNLSIKKSKTT) are disordered. Residues 23-34 (LKRDLRNYHDGD) are compositionally biased toward basic and acidic residues. Residues 590–665 (SVNLEAELQK…LENRQEGVST (76 aa)) are a coiled coil. A Nuclear localization signal motif is present at residues 672-679 (ARRDVTED).

This sequence belongs to the MORC ATPase protein family. In terms of assembly, homodimer and heterodimer. Component of an RNA-directed DNA methylation (RdDM) complex. It depends on Mg(2+) as a cofactor. Requires Mn(2+) as cofactor.

It localises to the nucleus. Its function is as follows. Exhibits ATPase activity. Binds DNA/RNA in a non-specific manner and exhibits endonuclease activity. Probably involved in DNA repair. Involved in RNA-directed DNA methylation (RdDM) as a component of the RdDM machinery and required for gene silencing. May also be involved in the regulation of chromatin architecture to maintain gene silencing. The protein is Protein MICRORCHIDIA 5 of Arabidopsis thaliana (Mouse-ear cress).